The chain runs to 285 residues: 2-dehydro-3-deoxyphosphooctonate aldolase (285 aa).

The protein belongs to the KdsA family.

The protein localises to the cytoplasm. The enzyme catalyses D-arabinose 5-phosphate + phosphoenolpyruvate + H2O = 3-deoxy-alpha-D-manno-2-octulosonate-8-phosphate + phosphate. It functions in the pathway carbohydrate biosynthesis; 3-deoxy-D-manno-octulosonate biosynthesis; 3-deoxy-D-manno-octulosonate from D-ribulose 5-phosphate: step 2/3. Its pathway is bacterial outer membrane biogenesis; lipopolysaccharide biosynthesis. In Polaromonas sp. (strain JS666 / ATCC BAA-500), this protein is 2-dehydro-3-deoxyphosphooctonate aldolase.